Consider the following 969-residue polypeptide: Protein translocase subunit SecA (969 aa).

ATP contacts are provided by residues Q99, 117–121, and D631; that span reads GEGKT.

Belongs to the SecA family. As to quaternary structure, monomer and homodimer. Part of the essential Sec protein translocation apparatus which comprises SecA, SecYEG and auxiliary proteins SecDF. Other proteins may also be involved.

It localises to the cell inner membrane. The protein localises to the cytoplasm. The catalysed reaction is ATP + H2O + cellular proteinSide 1 = ADP + phosphate + cellular proteinSide 2.. Part of the Sec protein translocase complex. Interacts with the SecYEG preprotein conducting channel. Has a central role in coupling the hydrolysis of ATP to the transfer of proteins into and across the cell membrane, serving as an ATP-driven molecular motor driving the stepwise translocation of polypeptide chains across the membrane. The sequence is that of Protein translocase subunit SecA from Chlamydia abortus (strain DSM 27085 / S26/3) (Chlamydophila abortus).